Reading from the N-terminus, the 359-residue chain is Palmitoyltransferase ERF2 (359 aa).

The disordered stretch occupies residues 1 to 21 (MALVSRRSTRSESTSITKEEH). Topologically, residues 1–75 (MALVSRRSTR…RFRTVKGAKP (75 aa)) are cytoplasmic. The helical transmembrane segment at 76-96 (LWLGVLLAIVCPMVLFSIFEA) threads the bilayer. Residues 97–104 (HKLWHTQN) are Lumenal-facing. Residues 105–125 (GYKVLVIFFYYFWVITLASFI) form a helical membrane-spanning segment. The Cytoplasmic segment spans residues 126–217 (RTATSDPGVL…NCIGKRNYRF (92 aa)). The DHHC domain maps to 173–223 (KYCPSCRIWRPPRSSHCSTCNVCVMVHDHHCIWVNNCIGKRNYRFFLIFLL). Cysteine 203 acts as the S-palmitoyl cysteine intermediate in catalysis. A helical transmembrane segment spans residues 218 to 238 (FLIFLLGAILSSVILLTNCAI). The Lumenal segment spans residues 239–250 (HIARESGGPRDC). Residues 251–271 (PVAILLLCYAGLTLWYPAILF) traverse the membrane as a helical segment. Residues 272 to 359 (TYHIFMAGNQ…AHSFEKIQKI (88 aa)) lie on the Cytoplasmic side of the membrane.

This sequence belongs to the DHHC palmitoyltransferase family. ERF2/ZDHHC9 subfamily. In terms of assembly, interacts with SHR5. In terms of processing, autopalmitoylated.

The protein resides in the endoplasmic reticulum membrane. It carries out the reaction L-cysteinyl-[protein] + hexadecanoyl-CoA = S-hexadecanoyl-L-cysteinyl-[protein] + CoA. In terms of biological role, the ERF2-SHR5 complex is a palmitoyltransferase specific for Ras proteins. Palmitoylates RAS2, which is required for its proper plasma membrane localization. The chain is Palmitoyltransferase ERF2 (ERF2) from Saccharomyces cerevisiae (strain ATCC 204508 / S288c) (Baker's yeast).